We begin with the raw amino-acid sequence, 247 residues long: 7-carboxy-7-deazaguanine synthase (247 aa).

Residues 15 to 17 and arginine 30 each bind substrate; that span reads IQG. In terms of domain architecture, Radical SAM core spans 21-247; sequence LVGRRQIFVR…PQMHRALGLR (227 aa). Cysteine 34, cysteine 38, and cysteine 41 together coordinate [4Fe-4S] cluster. Threonine 43 is a binding site for Mg(2+). Residue threonine 78 coordinates substrate. S-adenosyl-L-methionine is bound at residue glycine 80.

Belongs to the radical SAM superfamily. 7-carboxy-7-deazaguanine synthase family. In terms of assembly, homodimer. It depends on [4Fe-4S] cluster as a cofactor. S-adenosyl-L-methionine serves as cofactor. Requires Mg(2+) as cofactor.

It carries out the reaction 6-carboxy-5,6,7,8-tetrahydropterin + H(+) = 7-carboxy-7-deazaguanine + NH4(+). It functions in the pathway purine metabolism; 7-cyano-7-deazaguanine biosynthesis. Functionally, catalyzes the complex heterocyclic radical-mediated conversion of 6-carboxy-5,6,7,8-tetrahydropterin (CPH4) to 7-carboxy-7-deazaguanine (CDG), a step common to the biosynthetic pathways of all 7-deazapurine-containing compounds. This Methanothermobacter thermautotrophicus (strain ATCC 29096 / DSM 1053 / JCM 10044 / NBRC 100330 / Delta H) (Methanobacterium thermoautotrophicum) protein is 7-carboxy-7-deazaguanine synthase.